Reading from the N-terminus, the 109-residue chain is Glutaredoxin 4 (109 aa).

Residues 4-106 form the Glutaredoxin domain; the sequence is LDKIKKQISE…TLLADVAAKY (103 aa). Residue Lys-21 participates in glutathione binding. Cys-29 contacts [2Fe-2S] cluster. Glutathione is bound by residues Arg-58, Phe-70, and 83–84; that span reads CD.

It belongs to the glutaredoxin family. Monothiol subfamily. As to quaternary structure, homodimer.

It localises to the cytoplasm. In terms of biological role, monothiol glutaredoxin involved in the biogenesis of iron-sulfur clusters. The polypeptide is Glutaredoxin 4 (grxD) (Pasteurella multocida (strain Pm70)).